The following is a 389-amino-acid chain: MTELKKTALHLVHEKLGARFTDFGGWDMPLKYSSELDEHHAVRNAVGVFDLSHMGEVRVTGPQAAEFLDHALISKLSAVKVGKAKYSMICTESGGIIDDLITYRLGDNEFLIVPNAGNVDNVVSALQGRTEGFDVEVNNESDATSMIAVQGPKAAQAMLEIVENVVDAPEASGAGETVAEAIEGLGYYAAFSGVAAGQPVLVARTGYTGEDGFELIVANDGAETVWTKAMDQAAQLGGLPCGLACRDTLRLEAGMPLYGNELSLKLTPVDAGLGILAATKSKDSFVGRDAIVSAKEKGTQQVLIGLAGEGRRAARGGYEVFAGDGEKAIGAVTSGALSPTLGHPVALAYVAKSAVSSGAAAEGATVEVDIRGKRFEYKVVALPFYSREK.

The protein belongs to the GcvT family. The glycine cleavage system is composed of four proteins: P, T, L and H.

The enzyme catalyses N(6)-[(R)-S(8)-aminomethyldihydrolipoyl]-L-lysyl-[protein] + (6S)-5,6,7,8-tetrahydrofolate = N(6)-[(R)-dihydrolipoyl]-L-lysyl-[protein] + (6R)-5,10-methylene-5,6,7,8-tetrahydrofolate + NH4(+). The glycine cleavage system catalyzes the degradation of glycine. The chain is Aminomethyltransferase from Corynebacterium jeikeium (strain K411).